The primary structure comprises 138 residues: Acidic phospholipase A2 2 (138 aa).

Positions 1–16 (MRTLWIVAVLLLGVEG) are cleaved as a signal peptide. 7 cysteine pairs are disulfide-bonded: Cys42–Cys131, Cys44–Cys60, Cys59–Cys111, Cys65–Cys138, Cys66–Cys104, Cys73–Cys97, and Cys91–Cys102. 3 residues coordinate Ca(2+): Tyr43, Gly45, and Gly47. The active site involves His63. Asp64 is a binding site for Ca(2+). Asp105 is a catalytic residue.

This sequence belongs to the phospholipase A2 family. Group II subfamily. D49 sub-subfamily. The cofactor is Ca(2+). Expressed by the venom gland.

The protein resides in the secreted. It carries out the reaction a 1,2-diacyl-sn-glycero-3-phosphocholine + H2O = a 1-acyl-sn-glycero-3-phosphocholine + a fatty acid + H(+). Functionally, snake venom phospholipase A2 (PLA2) that displays edema-inducing activities, exhibits indirect hemolytic activity, and inhibits ADP-induced platelet aggregation. PLA2 catalyzes the calcium-dependent hydrolysis of the 2-acyl groups in 3-sn-phosphoglycerides. This Protobothrops mucrosquamatus (Taiwan habu) protein is Acidic phospholipase A2 2.